A 239-amino-acid polypeptide reads, in one-letter code: MDMKKRLMLELRNRKAADAKELVLDNCRSDDGKIIGLTSEFESLEFLSMINVNLLSVANLPKLPKLKKLELSDNRISGGLEVLAERTPNLTHLNLSGNKIKEINTLEPLKKLPHLMSLDLFNCEVTMLNNYRESVFELLPKLTFLDGFDADDQEAPDSDPEAEDLEENGEDGEEDEEDDEEEEEFEDELDDEDEDEEGEEEEDGEEEDEDDEDVPQGEKRKRDLSDEGEEEEEDDEDDE.

4 LRR repeats span residues 16-40 (AADA…LTSE), 43-64 (SLEF…PKLP), 65-87 (KLKK…AERT), and 89-110 (NLTH…EPLK). Residues 123–165 (CEVTMLNNYRESVFELLPKLTFLDGFDADDQEAPDSDPEAEDL) enclose the LRRCT domain. Residues 149–215 (DADDQEAPDS…EEDEDDEDVP (67 aa)) show a composition bias toward acidic residues. A disordered region spans residues 149–239 (DADDQEAPDS…EEEEDDEDDE (91 aa)). A compositionally biased stretch (basic and acidic residues) spans 216–225 (QGEKRKRDLS). Residues 226–239 (DEGEEEEEDDEDDE) show a composition bias toward acidic residues.

It belongs to the ANP32 family.

Its subcellular location is the nucleus. Its function is as follows. Multifunctional protein working as a cell cycle progression factor as well as a cell survival factor. Required for the progression from the G1 to the S phase. Anti-apoptotic protein which functions as a caspase-3 inhibitor. Has no phosphatase 2A (PP2A) inhibitor activity. Exhibits histone chaperone properties, stimulating core histones to assemble into a nucleosome. This is Acidic leucine-rich nuclear phosphoprotein 32 family member B (anp32b) from Xenopus laevis (African clawed frog).